We begin with the raw amino-acid sequence, 346 residues long: tRNA/tmRNA (uracil-C(5))-methyltransferase (346 aa).

S-adenosyl-L-methionine contacts are provided by glutamine 168, tyrosine 197, asparagine 202, glutamate 218, and aspartate 278. Catalysis depends on cysteine 303, which acts as the Nucleophile. The Proton acceptor role is filled by glutamate 337.

This sequence belongs to the class I-like SAM-binding methyltransferase superfamily. RNA M5U methyltransferase family. TrmA subfamily.

The enzyme catalyses uridine(54) in tRNA + S-adenosyl-L-methionine = 5-methyluridine(54) in tRNA + S-adenosyl-L-homocysteine + H(+). The catalysed reaction is uridine(341) in tmRNA + S-adenosyl-L-methionine = 5-methyluridine(341) in tmRNA + S-adenosyl-L-homocysteine + H(+). Functionally, dual-specificity methyltransferase that catalyzes the formation of 5-methyluridine at position 54 (m5U54) in all tRNAs, and that of position 341 (m5U341) in tmRNA (transfer-mRNA). The chain is tRNA/tmRNA (uracil-C(5))-methyltransferase from Campylobacter lari (strain RM2100 / D67 / ATCC BAA-1060).